We begin with the raw amino-acid sequence, 229 residues long: 5'-methylthioadenosine/S-adenosylhomocysteine nucleosidase (229 aa).

The active-site Proton acceptor is Glu-12. Substrate-binding positions include Gly-78, Ile-152, and 173-174; that span reads ME. Residue Asp-197 is the Proton donor of the active site.

Belongs to the PNP/UDP phosphorylase family. MtnN subfamily.

It catalyses the reaction S-adenosyl-L-homocysteine + H2O = S-(5-deoxy-D-ribos-5-yl)-L-homocysteine + adenine. It carries out the reaction S-methyl-5'-thioadenosine + H2O = 5-(methylsulfanyl)-D-ribose + adenine. The catalysed reaction is 5'-deoxyadenosine + H2O = 5-deoxy-D-ribose + adenine. Its pathway is amino-acid biosynthesis; L-methionine biosynthesis via salvage pathway; S-methyl-5-thio-alpha-D-ribose 1-phosphate from S-methyl-5'-thioadenosine (hydrolase route): step 1/2. Its function is as follows. Catalyzes the irreversible cleavage of the glycosidic bond in both 5'-methylthioadenosine (MTA) and S-adenosylhomocysteine (SAH/AdoHcy) to adenine and the corresponding thioribose, 5'-methylthioribose and S-ribosylhomocysteine, respectively. Also cleaves 5'-deoxyadenosine, a toxic by-product of radical S-adenosylmethionine (SAM) enzymes, into 5-deoxyribose and adenine. The protein is 5'-methylthioadenosine/S-adenosylhomocysteine nucleosidase of Baumannia cicadellinicola subsp. Homalodisca coagulata.